The sequence spans 414 residues: MSDTLASPSPETASGIPDYPMSRSAGCPFAPPPGVMALAAAKPLTRVRIWDGSTPWLITGYEQVRELFSDSRVSVDDRLPGFPHWNAGMLSTVHKRPRSVFTADGEEHTRFRRMLSKPFTFKRVEALRPTIQQITDEHIDAMLAGPQPADLVAKLALPVPSLVISQLLGVPYEDAEMFQHHANVGLARYATGADTVKGAMSLHKYLAELVEAKMANPAEDAVSDLAERVKAGELSVKEAAQLGTGLLIAGHETTANMIGLGVLALLVNPDQAGILRDAQDPKIVANAVEELLRYLSIIQNGQRRVAHEDIHIGGETIRAGEGIIIDLAPANWDAHAFTEPDRLYLHRAGAERNVAFGYGRHQCVGQQLARAELQIVYRTLLQRIPTLTLATALEDVPFKDDRLAYGVYELPVTW.

The segment covering 1–12 (MSDTLASPSPET) has biased composition (polar residues). Residues 1-21 (MSDTLASPSPETASGIPDYPM) are disordered. Heme is bound by residues His-108, Gln-302, Arg-304, His-361, and Cys-363.

It belongs to the cytochrome P450 family. It depends on heme as a cofactor.

Its function is as follows. Can bind oleic-acid derivatives, amphotericin B like precursors and a variety of nitrogen ligand donors. The chain is Cytochrome P450 CYP105Q4 from Mycobacterium marinum (strain ATCC BAA-535 / M).